The chain runs to 92 residues: Translation initiation factor IF-1 (92 aa).

In terms of domain architecture, S1-like spans 1 to 72 (MAKEELIQFE…EKGRLIFRHK (72 aa)). The interval 69–92 (FRHKDERPGGPPRSGPPRGQFRRR) is disordered.

It belongs to the IF-1 family. In terms of assembly, component of the 30S ribosomal translation pre-initiation complex which assembles on the 30S ribosome in the order IF-2 and IF-3, IF-1 and N-formylmethionyl-tRNA(fMet); mRNA recruitment can occur at any time during PIC assembly.

It is found in the cytoplasm. In terms of biological role, one of the essential components for the initiation of protein synthesis. Stabilizes the binding of IF-2 and IF-3 on the 30S subunit to which N-formylmethionyl-tRNA(fMet) subsequently binds. Helps modulate mRNA selection, yielding the 30S pre-initiation complex (PIC). Upon addition of the 50S ribosomal subunit IF-1, IF-2 and IF-3 are released leaving the mature 70S translation initiation complex. This chain is Translation initiation factor IF-1, found in Rhodopseudomonas palustris (strain ATCC BAA-98 / CGA009).